A 255-amino-acid chain; its full sequence is Probable membrane transporter protein HI_0198 (255 aa).

The next 8 membrane-spanning stretches (helical) occupy residues 7 to 27 (LLAI…IAGG), 28 to 48 (GGLI…MALG), 76 to 96 (IWFI…LIQS), 99 to 119 (VAIF…YFLF), 132 to 152 (LSYL…DGFF), 153 to 173 (GPGT…FNLP), 191 to 211 (FALF…MMAG), and 235 to 255 (VVIM…WFHF).

Belongs to the 4-toluene sulfonate uptake permease (TSUP) (TC 2.A.102) family.

The protein localises to the cell membrane. This chain is Probable membrane transporter protein HI_0198, found in Haemophilus influenzae (strain ATCC 51907 / DSM 11121 / KW20 / Rd).